Here is a 354-residue protein sequence, read N- to C-terminus: NAD-dependent protein deacetylase hst2-2 (354 aa).

The Deacetylase sirtuin-type domain occupies 16–279; sequence QCQNQTTLDS…REVARHLGWD (264 aa). NAD(+) contacts are provided by residues 43 to 63 and 126 to 129; these read GAGL…TGLY and QNID. H146 serves as the catalytic Proton acceptor. 4 residues coordinate Zn(2+): C154, C157, C178, and C183. Residues 220-222, 245-247, and C265 contribute to the NAD(+) site; these read GTS and NRE.

This sequence belongs to the sirtuin family. Class I subfamily. Requires Zn(2+) as cofactor.

The protein resides in the nucleus. The catalysed reaction is N(6)-acetyl-L-lysyl-[protein] + NAD(+) + H2O = 2''-O-acetyl-ADP-D-ribose + nicotinamide + L-lysyl-[protein]. Its function is as follows. NAD-dependent histone deacetylase, which could function in telomeric silencing, cell cycle progression and chromosome stability. The sequence is that of NAD-dependent protein deacetylase hst2-2 from Emericella nidulans (strain FGSC A4 / ATCC 38163 / CBS 112.46 / NRRL 194 / M139) (Aspergillus nidulans).